Reading from the N-terminus, the 276-residue chain is Dermonecrotic toxin LsaSicTox-alphaIB2iii (276 aa).

His5 is a catalytic residue. 2 residues coordinate Mg(2+): Glu25 and Asp27. The active-site Nucleophile is His41. Disulfide bonds link Cys45-Cys51 and Cys47-Cys190. Asp85 serves as a coordination point for Mg(2+). N-linked (GlcNAc...) asparagine glycosylation is found at Asn129 and Asn253.

Belongs to the arthropod phospholipase D family. Class II subfamily. Mg(2+) is required as a cofactor. Expressed by the venom gland.

Its subcellular location is the secreted. It carries out the reaction an N-(acyl)-sphingosylphosphocholine = an N-(acyl)-sphingosyl-1,3-cyclic phosphate + choline. The enzyme catalyses an N-(acyl)-sphingosylphosphoethanolamine = an N-(acyl)-sphingosyl-1,3-cyclic phosphate + ethanolamine. It catalyses the reaction a 1-acyl-sn-glycero-3-phosphocholine = a 1-acyl-sn-glycero-2,3-cyclic phosphate + choline. The catalysed reaction is a 1-acyl-sn-glycero-3-phosphoethanolamine = a 1-acyl-sn-glycero-2,3-cyclic phosphate + ethanolamine. Its function is as follows. Dermonecrotic toxins cleave the phosphodiester linkage between the phosphate and headgroup of certain phospholipids (sphingolipid and lysolipid substrates), forming an alcohol (often choline) and a cyclic phosphate. This toxin acts on sphingomyelin (SM). It may also act on ceramide phosphoethanolamine (CPE), lysophosphatidylcholine (LPC) and lysophosphatidylethanolamine (LPE), but not on lysophosphatidylserine (LPS), and lysophosphatidylglycerol (LPG). It acts by transphosphatidylation, releasing exclusively cyclic phosphate products as second products. Induces dermonecrosis, hemolysis, increased vascular permeability, edema, inflammatory response, and platelet aggregation. The protein is Dermonecrotic toxin LsaSicTox-alphaIB2iii of Loxosceles sabina (Tucson recluse spider).